The primary structure comprises 82 residues: Diptericin-A (82 aa).

2 disordered regions span residues 1-32 (DEKP…DGFG) and 45-69 (DNGG…GNSR). The residue at position 82 (phenylalanine 82) is a Phenylalanine amide.

This sequence belongs to the attacin/sarcotoxin-2 family.

It localises to the secreted. Antimicrobial peptide required to resist Gram-negative bacterial infections, regulated by Dredd. The polypeptide is Diptericin-A (Protophormia terraenovae (Northern blowfly)).